A 284-amino-acid chain; its full sequence is RNase adapter protein RapZ (284 aa).

8–15 is a binding site for ATP; sequence GRSGSGKS. Position 56-59 (56-59) interacts with GTP; sequence DVRN. Residues 266–284 are RNA-binding; that stretch reads RSRGKNVQSRHRTLEKRKP.

Belongs to the RapZ-like family. RapZ subfamily. In terms of assembly, homotrimer.

Its function is as follows. Modulates the synthesis of GlmS, by affecting the processing and stability of the regulatory small RNA GlmZ. When glucosamine-6-phosphate (GlcN6P) concentrations are high in the cell, RapZ binds GlmZ and targets it to cleavage by RNase E. Consequently, GlmZ is inactivated and unable to activate GlmS synthesis. Under low GlcN6P concentrations, RapZ is sequestered and inactivated by an other regulatory small RNA, GlmY, preventing GlmZ degradation and leading to synthesis of GlmS. This is RNase adapter protein RapZ from Escherichia coli O1:K1 / APEC.